Consider the following 339-residue polypeptide: Ketol-acid reductoisomerase (NADP(+)) (339 aa).

A KARI N-terminal Rossmann domain is found at 1–182 (MRVYYDRDAD…GGGRAGIIET (182 aa)). NADP(+) contacts are provided by residues 24 to 27 (YGSQ), Arg48, Ser51, Ser53, and 83 to 86 (DELQ). The active site involves His108. Gly134 contacts NADP(+). One can recognise a KARI C-terminal knotted domain in the interval 183-328 (TFREECETDL…AKLRDMMPWI (146 aa)). Mg(2+) contacts are provided by Asp191, Glu195, Glu227, and Glu231. Ser252 serves as a coordination point for substrate.

Belongs to the ketol-acid reductoisomerase family. Mg(2+) serves as cofactor.

It catalyses the reaction (2R)-2,3-dihydroxy-3-methylbutanoate + NADP(+) = (2S)-2-acetolactate + NADPH + H(+). The enzyme catalyses (2R,3R)-2,3-dihydroxy-3-methylpentanoate + NADP(+) = (S)-2-ethyl-2-hydroxy-3-oxobutanoate + NADPH + H(+). The protein operates within amino-acid biosynthesis; L-isoleucine biosynthesis; L-isoleucine from 2-oxobutanoate: step 2/4. It functions in the pathway amino-acid biosynthesis; L-valine biosynthesis; L-valine from pyruvate: step 2/4. Its function is as follows. Involved in the biosynthesis of branched-chain amino acids (BCAA). Catalyzes an alkyl-migration followed by a ketol-acid reduction of (S)-2-acetolactate (S2AL) to yield (R)-2,3-dihydroxy-isovalerate. In the isomerase reaction, S2AL is rearranged via a Mg-dependent methyl migration to produce 3-hydroxy-3-methyl-2-ketobutyrate (HMKB). In the reductase reaction, this 2-ketoacid undergoes a metal-dependent reduction by NADPH to yield (R)-2,3-dihydroxy-isovalerate. The sequence is that of Ketol-acid reductoisomerase (NADP(+)) from Rhodopseudomonas palustris (strain BisB18).